We begin with the raw amino-acid sequence, 230 residues long: UPF0173 metal-dependent hydrolase LI0883 (230 aa).

This sequence belongs to the UPF0173 family.

This is UPF0173 metal-dependent hydrolase LI0883 from Lawsonia intracellularis (strain PHE/MN1-00).